We begin with the raw amino-acid sequence, 356 residues long: UDP-3-O-acylglucosamine N-acyltransferase (356 aa).

The active-site Proton acceptor is the His-242.

It belongs to the transferase hexapeptide repeat family. LpxD subfamily. As to quaternary structure, homotrimer.

It catalyses the reaction a UDP-3-O-[(3R)-3-hydroxyacyl]-alpha-D-glucosamine + a (3R)-hydroxyacyl-[ACP] = a UDP-2-N,3-O-bis[(3R)-3-hydroxyacyl]-alpha-D-glucosamine + holo-[ACP] + H(+). The protein operates within bacterial outer membrane biogenesis; LPS lipid A biosynthesis. Catalyzes the N-acylation of UDP-3-O-acylglucosamine using 3-hydroxyacyl-ACP as the acyl donor. Is involved in the biosynthesis of lipid A, a phosphorylated glycolipid that anchors the lipopolysaccharide to the outer membrane of the cell. This chain is UDP-3-O-acylglucosamine N-acyltransferase, found in Acinetobacter baumannii (strain ACICU).